The primary structure comprises 342 residues: MLKDQNLDIERKQDHIEINLTQNVESTLKSGFESIHFIHNALPELNYDSINTTTTFLGKSLQAPILISSMTGGTTRARDINYRLAQVAQKAGIAMGLGSMRVLLTEPDTIKTFAVRHIAPDIPLLANIGAVQLNYGVTPKECQYLVDAIKADALILHLNVLQELTQPEGNRNWEKLLPKIREVVHYLSIPVIVKEVGYGLSKKVAESLIDAGVKVLDIAGSGGTSWSQVEAYRATNSLQNRIASSFINWGIPTLDSLKMVREVSKDIPIITSGGLKSGIDGAKAIRIGANIFGLAGQFLKAADTSESLLFEEIQLIIEQLKITMLCTGSRTLKDLAKAEIRL.

A substrate-binding site is contributed by 11–12 (RK). FMN-binding positions include serine 68, 69–71 (SMT), serine 99, and asparagine 127. 99–101 (SMR) is a substrate binding site. Glutamine 162 lines the substrate pocket. Glutamate 163 provides a ligand contact to Mg(2+). FMN is bound by residues lysine 194, threonine 224, 274 to 276 (GLK), and 295 to 296 (AG).

Belongs to the IPP isomerase type 2 family. As to quaternary structure, homooctamer. Dimer of tetramers. FMN is required as a cofactor. Requires NADPH as cofactor. It depends on Mg(2+) as a cofactor.

It localises to the cytoplasm. It catalyses the reaction isopentenyl diphosphate = dimethylallyl diphosphate. Functionally, involved in the biosynthesis of isoprenoids. Catalyzes the 1,3-allylic rearrangement of the homoallylic substrate isopentenyl (IPP) to its allylic isomer, dimethylallyl diphosphate (DMAPP). This chain is Isopentenyl-diphosphate delta-isomerase, found in Rickettsia rickettsii (strain Iowa).